The sequence spans 314 residues: 4-hydroxy-3-methylbut-2-enyl diphosphate reductase (314 aa).

Cys-12 lines the [4Fe-4S] cluster pocket. 2 residues coordinate (2E)-4-hydroxy-3-methylbut-2-enyl diphosphate: His-41 and His-74. Residues His-41 and His-74 each contribute to the dimethylallyl diphosphate site. Isopentenyl diphosphate is bound by residues His-41 and His-74. Cys-96 contacts [4Fe-4S] cluster. Position 124 (His-124) interacts with (2E)-4-hydroxy-3-methylbut-2-enyl diphosphate. A dimethylallyl diphosphate-binding site is contributed by His-124. Isopentenyl diphosphate is bound at residue His-124. Glu-126 serves as the catalytic Proton donor. Residue Thr-167 coordinates (2E)-4-hydroxy-3-methylbut-2-enyl diphosphate. Cys-197 contacts [4Fe-4S] cluster. 4 residues coordinate (2E)-4-hydroxy-3-methylbut-2-enyl diphosphate: Ser-225, Ser-226, Asn-227, and Ser-269. Dimethylallyl diphosphate is bound by residues Ser-225, Ser-226, Asn-227, and Ser-269. Residues Ser-225, Ser-226, Asn-227, and Ser-269 each contribute to the isopentenyl diphosphate site.

This sequence belongs to the IspH family. [4Fe-4S] cluster is required as a cofactor.

It catalyses the reaction isopentenyl diphosphate + 2 oxidized [2Fe-2S]-[ferredoxin] + H2O = (2E)-4-hydroxy-3-methylbut-2-enyl diphosphate + 2 reduced [2Fe-2S]-[ferredoxin] + 2 H(+). The catalysed reaction is dimethylallyl diphosphate + 2 oxidized [2Fe-2S]-[ferredoxin] + H2O = (2E)-4-hydroxy-3-methylbut-2-enyl diphosphate + 2 reduced [2Fe-2S]-[ferredoxin] + 2 H(+). It participates in isoprenoid biosynthesis; dimethylallyl diphosphate biosynthesis; dimethylallyl diphosphate from (2E)-4-hydroxy-3-methylbutenyl diphosphate: step 1/1. Its pathway is isoprenoid biosynthesis; isopentenyl diphosphate biosynthesis via DXP pathway; isopentenyl diphosphate from 1-deoxy-D-xylulose 5-phosphate: step 6/6. Its function is as follows. Catalyzes the conversion of 1-hydroxy-2-methyl-2-(E)-butenyl 4-diphosphate (HMBPP) into a mixture of isopentenyl diphosphate (IPP) and dimethylallyl diphosphate (DMAPP). Acts in the terminal step of the DOXP/MEP pathway for isoprenoid precursor biosynthesis. The protein is 4-hydroxy-3-methylbut-2-enyl diphosphate reductase of Histophilus somni (strain 2336) (Haemophilus somnus).